Reading from the N-terminus, the 917-residue chain is Catenin alpha (917 aa).

Phosphothreonine occurs at positions 643 and 645. Residues S659 and S662 each carry the phosphoserine modification. Basic and acidic residues predominate over residues 878–890 (PLVRPEKPEEVRA). The segment at 878 to 905 (PLVRPEKPEEVRAKVRKGSQKKVQNPIH) is disordered.

Belongs to the vinculin/alpha-catenin family. As to quaternary structure, interacts with arm/armadillo protein. In terms of processing, rapidly phosphorylated by CK2 and more slowly by CK1.

It localises to the cytoplasm. Its subcellular location is the cytoskeleton. It is found in the cell junction. The protein localises to the adherens junction. The protein resides in the cell membrane. In terms of biological role, associates with the cytoplasmic domain of a variety of cadherins. The association of catenins to cadherins produces a complex which is linked to the actin filament network, and which seems to be of primary importance for cadherins cell-adhesion properties. This chain is Catenin alpha, found in Drosophila melanogaster (Fruit fly).